The chain runs to 484 residues: Sialidase-4 (484 aa).

An FRIP motif motif is present at residues 22 to 25 (YRVP). The substrate site is built by Arg-23 and Arg-43. Residues Asp-47 and Asp-48 each act as proton acceptor in the active site. The stretch at 127 to 138 (VASRDAGLSWGS) is one BNR 1 repeat. Substrate contacts are provided by Tyr-177 and Tyr-179. One copy of the BNR 2 repeat lies at 200–211 (FYSDDHGRTWRC). 2 residues coordinate substrate: Glu-222 and Arg-242. A BNR 3 repeat occupies 251-262 (ALSTDEGTSFLP). Residues 284–357 (PAPAPNRPRD…GPRPGVSGDV (74 aa)) are disordered. The segment covering 336 to 345 (RLQPRGDGPR) has biased composition (low complexity). A substrate-binding site is contributed by Arg-389. Tyr-419 serves as the catalytic Nucleophile. Residue Glu-440 is part of the active site.

This sequence belongs to the glycosyl hydrolase 33 family. N-glycosylated. Predominant form in liver. Also expressed in brain, kidney and colon. As to expression, highly expressed in brain and at lower levels in kidney and liver.

The protein resides in the cell membrane. It localises to the endoplasmic reticulum membrane. Its subcellular location is the microsome membrane. It is found in the mitochondrion membrane. The protein localises to the cell projection. The protein resides in the neuron projection. It localises to the mitochondrion inner membrane. Its subcellular location is the mitochondrion outer membrane. It is found in the lysosome lumen. It catalyses the reaction Hydrolysis of alpha-(2-&gt;3)-, alpha-(2-&gt;6)-, alpha-(2-&gt;8)- glycosidic linkages of terminal sialic acid residues in oligosaccharides, glycoproteins, glycolipids, colominic acid and synthetic substrates.. The catalysed reaction is a ganglioside GM3 + H2O = a beta-D-galactosyl-(1-&gt;4)-beta-D-glucosyl-(1&lt;-&gt;1)-ceramide + N-acetylneuraminate. The enzyme catalyses a ganglioside GM3 (d18:1(4E)) + H2O = a beta-D-Gal-(1-&gt;4)-beta-D-Glc-(1&lt;-&gt;1)-Cer(d18:1(4E)) + N-acetylneuraminate. It carries out the reaction a ganglioside GM2 + H2O = a ganglioside GA2 + N-acetylneuraminate. It catalyses the reaction a ganglioside GM2 (d18:1(4E)) + H2O = a ganglioside GA2 (d18:1(4E)) + N-acetylneuraminate. The catalysed reaction is a ganglioside GD1a + H2O = a ganglioside GM1 + N-acetylneuraminate. The enzyme catalyses a ganglioside GD1a (d18:1(4E)) + H2O = a ganglioside GM1 (d18:1(4E)) + N-acetylneuraminate. It carries out the reaction a ganglioside GD3 + H2O = a ganglioside GM3 + N-acetylneuraminate. It catalyses the reaction a ganglioside GD3 (d18:1(4E)) + H2O = a ganglioside GM3 (d18:1(4E)) + N-acetylneuraminate. Exo-alpha-sialidase that catalyzes the hydrolytic cleavage of the terminal sialic acid (N-acetylneuraminic acid, Neu5Ac) of a glycan moiety in the catabolism of glycolipids, glycoproteins and oligosacharides. Efficiently hydrolyzes gangliosides including alpha-(2-&gt;3)-sialylated GD1a and GM3 and alpha-(2-&gt;8)-sialylated GD3. Hydrolyzes poly-alpha-(2-&gt;8)-sialylated neural cell adhesion molecule NCAM1 likely at growth cones, suppressing neurite outgrowth in hippocampal neurons. May desialylate sialyl Lewis A and X antigens at the cell surface, down-regulating these glycan epitopes recognized by SELE/E selectin in the initiation of cell adhesion and extravasation. Has sialidase activity toward mucin, fetuin and sialyllactose. This is Sialidase-4 (NEU4) from Homo sapiens (Human).